The sequence spans 405 residues: L-carnitine CoA-transferase (405 aa).

Residues Lys-97 and Arg-104 each contribute to the CoA site. Residue Asp-169 is the Nucleophile of the active site.

It belongs to the CoA-transferase III family. CaiB subfamily. Homodimer.

Its subcellular location is the cytoplasm. The enzyme catalyses crotonobetainyl-CoA + (R)-carnitine = crotonobetaine + (R)-carnitinyl-CoA. It carries out the reaction 4-(trimethylamino)butanoyl-CoA + (R)-carnitine = (R)-carnitinyl-CoA + 4-(trimethylamino)butanoate. It participates in amine and polyamine metabolism; carnitine metabolism. Catalyzes the reversible transfer of the CoA moiety from gamma-butyrobetainyl-CoA to L-carnitine to generate L-carnitinyl-CoA and gamma-butyrobetaine. Is also able to catalyze the reversible transfer of the CoA moiety from gamma-butyrobetainyl-CoA or L-carnitinyl-CoA to crotonobetaine to generate crotonobetainyl-CoA. The polypeptide is L-carnitine CoA-transferase (Escherichia coli O7:K1 (strain IAI39 / ExPEC)).